A 941-amino-acid chain; its full sequence is Myosin heavy chain kinase D (941 aa).

The stretch at 8 to 48 (KLSKKIEKILEKNDYLKKKVEQLTKSVDNHEFKIQELLLLL) forms a coiled coil. Composition is skewed to low complexity over residues 57 to 70 (TTTT…NNST), 84 to 115 (TSTD…TTTS), and 124 to 206 (NSNN…PQLS). Disordered regions lie at residues 57-234 (TTTT…KEDS) and 276-310 (SSNN…QQQQ). Positions 289–317 (SILNDQQNQQQNQQQQNQQQQQEEINFIT) form a coiled coil. Residues 337–582 (EYSANDDEWT…ICLQFGLPPI (246 aa)) form the Alpha-type protein kinase domain. WD repeat units lie at residues 635–674 (GHDE…DLSK), 683–720 (AHRR…TTTT), 741–780 (DHTA…CIKS), 783–820 (AHGK…CVYG), 824–861 (AHDA…PTTT), 864–902 (QHNM…EPIK), and 909–941 (AHRS…WKNK).

It belongs to the protein kinase superfamily. Alpha-type protein kinase family. ALPK subfamily.

The catalysed reaction is L-threonyl-[myosin heavy-chain] + ATP = O-phospho-L-threonyl-[myosin heavy-chain] + ADP + H(+). Phosphorylates threonine. Not critical for regulating the assembly and disassembly of myosin II filament. The sequence is that of Myosin heavy chain kinase D (mhkD) from Dictyostelium discoideum (Social amoeba).